We begin with the raw amino-acid sequence, 159 residues long: 2-C-methyl-D-erythritol 2,4-cyclodiphosphate synthase (159 aa).

A divalent metal cation is bound by residues D10 and H12. Residues 10 to 12 (DVH) and 36 to 37 (HS) each bind 4-CDP-2-C-methyl-D-erythritol 2-phosphate. H44 is a binding site for a divalent metal cation. Residues 58 to 60 (DIG), 134 to 137 (TTSE), F141, and R144 each bind 4-CDP-2-C-methyl-D-erythritol 2-phosphate.

The protein belongs to the IspF family. Homotrimer. It depends on a divalent metal cation as a cofactor.

The catalysed reaction is 4-CDP-2-C-methyl-D-erythritol 2-phosphate = 2-C-methyl-D-erythritol 2,4-cyclic diphosphate + CMP. Its pathway is isoprenoid biosynthesis; isopentenyl diphosphate biosynthesis via DXP pathway; isopentenyl diphosphate from 1-deoxy-D-xylulose 5-phosphate: step 4/6. Its function is as follows. Involved in the biosynthesis of isopentenyl diphosphate (IPP) and dimethylallyl diphosphate (DMAPP), two major building blocks of isoprenoid compounds. Catalyzes the conversion of 4-diphosphocytidyl-2-C-methyl-D-erythritol 2-phosphate (CDP-ME2P) to 2-C-methyl-D-erythritol 2,4-cyclodiphosphate (ME-CPP) with a corresponding release of cytidine 5-monophosphate (CMP). In Roseobacter denitrificans (strain ATCC 33942 / OCh 114) (Erythrobacter sp. (strain OCh 114)), this protein is 2-C-methyl-D-erythritol 2,4-cyclodiphosphate synthase.